The following is a 367-amino-acid chain: Quinolinate synthase (367 aa).

Iminosuccinate is bound by residues His45 and Ser62. Residue Cys109 coordinates [4Fe-4S] cluster. Residues 140–142 and Ser161 contribute to the iminosuccinate site; that span reads YVN. Cys229 lines the [4Fe-4S] cluster pocket. Residues 255–257 and Thr272 contribute to the iminosuccinate site; that span reads HPE. Cys319 lines the [4Fe-4S] cluster pocket.

The protein belongs to the quinolinate synthase family. Type 3 subfamily. The cofactor is [4Fe-4S] cluster.

Its subcellular location is the cytoplasm. The enzyme catalyses iminosuccinate + dihydroxyacetone phosphate = quinolinate + phosphate + 2 H2O + H(+). Its pathway is cofactor biosynthesis; NAD(+) biosynthesis; quinolinate from iminoaspartate: step 1/1. Functionally, catalyzes the condensation of iminoaspartate with dihydroxyacetone phosphate to form quinolinate. This Geobacillus sp. (strain WCH70) protein is Quinolinate synthase.